The sequence spans 567 residues: Major facilitator superfamily transporter MG061 (567 aa).

12 helical membrane passes run 15–35 (ITLW…WFVI), 78–98 (WTIT…VLKF), 104–124 (VLIM…GDPL), 193–213 (GYAL…TLVV), 230–250 (ILSN…FTPF), 264–284 (VYIM…FLWF), 321–341 (LIGV…PAWF), 363–383 (TGLA…FVVF), 405–425 (IVVL…SAAG), 426–446 (FALI…LSSS), 462–482 (LPIL…LFDI), and 503–523 (PGVI…NLIV).

The protein belongs to the major facilitator superfamily.

Its subcellular location is the cell membrane. This Mycoplasma genitalium (strain ATCC 33530 / DSM 19775 / NCTC 10195 / G37) (Mycoplasmoides genitalium) protein is Major facilitator superfamily transporter MG061.